Reading from the N-terminus, the 161-residue chain is Large ribosomal subunit protein uL11 (161 aa).

The protein belongs to the universal ribosomal protein uL11 family. Part of the ribosomal stalk of the 50S ribosomal subunit. Interacts with L10 and the large rRNA to form the base of the stalk. L10 forms an elongated spine to which L12 dimers bind in a sequential fashion forming a multimeric L10(L12)X complex.

Forms part of the ribosomal stalk which helps the ribosome interact with GTP-bound translation factors. This chain is Large ribosomal subunit protein uL11, found in Methanocaldococcus jannaschii (strain ATCC 43067 / DSM 2661 / JAL-1 / JCM 10045 / NBRC 100440) (Methanococcus jannaschii).